Consider the following 151-residue polypeptide: Ubiquitin-like protein 4A-B (151 aa).

A Ubiquitin-like domain is found at 1 to 76 (MILTIKPLKG…LNLVVRPAGE (76 aa)).

Component of the BAT3 complex.

It is found in the cytoplasm. The protein resides in the cytosol. Component of the BAT3 complex, a multiprotein complex involved in the post-translational delivery of tail-anchored (TA) membrane proteins to the endoplasmic reticulum membrane. TA membrane proteins, also named type II transmembrane proteins, contain a single C-terminal transmembrane region. The polypeptide is Ubiquitin-like protein 4A-B (ubl4ab) (Oncorhynchus mykiss (Rainbow trout)).